We begin with the raw amino-acid sequence, 312 residues long: Putative 1-aminocyclopropane-1-carboxylate deaminase (312 aa).

Position 42 is an N6-(pyridoxal phosphate)lysine (Lys-42).

The protein belongs to the ACC deaminase/D-cysteine desulfhydrase family. Pyridoxal 5'-phosphate is required as a cofactor.

It carries out the reaction 1-aminocyclopropane-1-carboxylate + H2O = 2-oxobutanoate + NH4(+). In Thermotoga maritima (strain ATCC 43589 / DSM 3109 / JCM 10099 / NBRC 100826 / MSB8), this protein is Putative 1-aminocyclopropane-1-carboxylate deaminase.